The chain runs to 344 residues: Nicotinate-nucleotide--dimethylbenzimidazole phosphoribosyltransferase (344 aa).

The Proton acceptor role is filled by E311.

The protein belongs to the CobT family.

It carries out the reaction 5,6-dimethylbenzimidazole + nicotinate beta-D-ribonucleotide = alpha-ribazole 5'-phosphate + nicotinate + H(+). It participates in nucleoside biosynthesis; alpha-ribazole biosynthesis; alpha-ribazole from 5,6-dimethylbenzimidazole: step 1/2. Catalyzes the synthesis of alpha-ribazole-5'-phosphate from nicotinate mononucleotide (NAMN) and 5,6-dimethylbenzimidazole (DMB). In Aromatoleum aromaticum (strain DSM 19018 / LMG 30748 / EbN1) (Azoarcus sp. (strain EbN1)), this protein is Nicotinate-nucleotide--dimethylbenzimidazole phosphoribosyltransferase.